Here is a 252-residue protein sequence, read N- to C-terminus: Hydroxyacylglutathione hydrolase (252 aa).

Zn(2+) contacts are provided by histidine 54, histidine 56, aspartate 58, histidine 59, histidine 111, aspartate 130, and histidine 170.

It belongs to the metallo-beta-lactamase superfamily. Glyoxalase II family. As to quaternary structure, monomer. Zn(2+) serves as cofactor.

It catalyses the reaction an S-(2-hydroxyacyl)glutathione + H2O = a 2-hydroxy carboxylate + glutathione + H(+). The protein operates within secondary metabolite metabolism; methylglyoxal degradation; (R)-lactate from methylglyoxal: step 2/2. In terms of biological role, thiolesterase that catalyzes the hydrolysis of S-D-lactoyl-glutathione to form glutathione and D-lactic acid. The sequence is that of Hydroxyacylglutathione hydrolase from Francisella philomiragia subsp. philomiragia (strain ATCC 25017 / CCUG 19701 / FSC 153 / O#319-036).